The chain runs to 255 residues: H-2 class II histocompatibility antigen, E-U alpha chain (255 aa).

An N-terminal signal peptide occupies residues 1-25 (MATIGALLLRFFFIAVLMSSQKSWA). Residues 26–109 (IKEEHTIIQA…KRSNNTPDAN (84 aa)) form an alpha-1 region. Over 26–217 (IKEEHTIIQA…KTLLPETKEN (192 aa)) the chain is Extracellular. The segment at 110–203 (VAPEVTVLSR…GLEEPLRKHW (94 aa)) is alpha-2. An Ig-like C1-type domain is found at 112–204 (PEVTVLSRSP…LEEPLRKHWE (93 aa)). C132 and C188 are joined by a disulfide. N-linked (GlcNAc...) asparagine glycosylation is present at N143. A connecting peptide region spans residues 204 to 216 (EFEEKTLLPETKE). Residues 218–238 (VVCALGLFVGLVGIVVGIILI) traverse the membrane as a helical segment. Topologically, residues 239–255 (MKGIKKRNVVERRQGAL) are cytoplasmic.

This sequence belongs to the MHC class II family.

The protein resides in the membrane. In Mus musculus (Mouse), this protein is H-2 class II histocompatibility antigen, E-U alpha chain (H2-Ea).